The following is an 882-amino-acid chain: Valine--tRNA ligase (882 aa).

The 'HIGH' region signature appears at 45–55 (PNVTGKLHLGH). A 'KMSKS' region motif is present at residues 519–523 (KMSKS). Lys522 lines the ATP pocket. Positions 808–882 (LADLLNVEEE…RIAEMHKLVK (75 aa)) form a coiled coil.

It belongs to the class-I aminoacyl-tRNA synthetase family. ValS type 1 subfamily. As to quaternary structure, monomer.

The protein localises to the cytoplasm. It carries out the reaction tRNA(Val) + L-valine + ATP = L-valyl-tRNA(Val) + AMP + diphosphate. Its function is as follows. Catalyzes the attachment of valine to tRNA(Val). As ValRS can inadvertently accommodate and process structurally similar amino acids such as threonine, to avoid such errors, it has a 'posttransfer' editing activity that hydrolyzes mischarged Thr-tRNA(Val) in a tRNA-dependent manner. In Streptococcus pyogenes serotype M18 (strain MGAS8232), this protein is Valine--tRNA ligase.